The following is a 504-amino-acid chain: MEINLTTKKLDNVKTDAVFFLMFEDNKKLEGELEKIDKALNGGVSDLIKLQKYKAEEGKFLIVPTLGKIKANYVAIVGLGKEKKFENDILRRVASYIIRKAKELKLSDIIIDTNLQQFENYDEVVQAITEGLILGDYSFDKYFSKKDEHKVKEVQVNIPKNQDKDRLNEFVRIGEILAEAQNFTRDLVNEPANVINTIQFAEIAEKLAKEYGFEIKIYDEEEIEKMGMGAYLAVAKGSDNPPRFIHLTYRPKNSQGEVAIVGKGLMFDSGGLNIKTGDFMRWMKSDKSGACAVFGIFKAIGELKPDITVHGIVAAAENMPSGKAYRPDDILKAKNGVTIEVGNTDAEGRLTLADALSYASELKPDAIIDMATLTGACVVALGEFTAGVMGNNQKFINEILKTSEETGEWMWQLPFNDKLREQIKAPHADVYNVGTTRYGGAITAGLFLEKFVDPKIPWVHIDIAGPSHHTSGWYYHPKGATGIPVRTITWYLLKRSKFFDKIGK.

Mn(2+) contacts are provided by K263 and D268. Residue K275 is part of the active site. 3 residues coordinate Mn(2+): D286, D345, and E347. The active site involves R349.

This sequence belongs to the peptidase M17 family. The cofactor is Mn(2+).

It localises to the cytoplasm. It catalyses the reaction Release of an N-terminal amino acid, Xaa-|-Yaa-, in which Xaa is preferably Leu, but may be other amino acids including Pro although not Arg or Lys, and Yaa may be Pro. Amino acid amides and methyl esters are also readily hydrolyzed, but rates on arylamides are exceedingly low.. It carries out the reaction Release of an N-terminal amino acid, preferentially leucine, but not glutamic or aspartic acids.. Its function is as follows. Presumably involved in the processing and regular turnover of intracellular proteins. Catalyzes the removal of unsubstituted N-terminal amino acids from various peptides. The chain is Probable cytosol aminopeptidase from Sulfurihydrogenibium sp. (strain YO3AOP1).